We begin with the raw amino-acid sequence, 562 residues long: Potassium-transporting ATPase potassium-binding subunit (562 aa).

The next 12 helical transmembrane spans lie at 6 to 26 (FLLI…LGSF), 63 to 83 (ALAI…LLMM), 132 to 152 (GLTV…FALI), 175 to 195 (LYVL…QGVL), 253 to 273 (FVQM…FGQV), 283 to 303 (LIWA…YAEL), 327 to 347 (FGIL…CGAV), 356 to 376 (ALGG…FGGV), 379 to 399 (GLYG…LMIG), 416 to 436 (MTAL…ALAL), 483 to 503 (LLLA…VLAI), and 526 to 546 (LFIG…FIPA).

The protein belongs to the KdpA family. The system is composed of three essential subunits: KdpA, KdpB and KdpC.

The protein localises to the cell inner membrane. Its function is as follows. Part of the high-affinity ATP-driven potassium transport (or Kdp) system, which catalyzes the hydrolysis of ATP coupled with the electrogenic transport of potassium into the cytoplasm. This subunit binds the periplasmic potassium ions and delivers the ions to the membrane domain of KdpB through an intramembrane tunnel. This Yersinia enterocolitica serotype O:8 / biotype 1B (strain NCTC 13174 / 8081) protein is Potassium-transporting ATPase potassium-binding subunit.